We begin with the raw amino-acid sequence, 259 residues long: 5'-nucleotidase SurE (259 aa).

A divalent metal cation contacts are provided by Asp8, Asp9, Ser40, and Asn92.

Belongs to the SurE nucleotidase family. A divalent metal cation serves as cofactor.

Its subcellular location is the cytoplasm. It catalyses the reaction a ribonucleoside 5'-phosphate + H2O = a ribonucleoside + phosphate. Nucleotidase that shows phosphatase activity on nucleoside 5'-monophosphates. The sequence is that of 5'-nucleotidase SurE from Xanthomonas euvesicatoria pv. vesicatoria (strain 85-10) (Xanthomonas campestris pv. vesicatoria).